The following is a 296-amino-acid chain: Thioredoxin-related transmembrane protein 2 (296 aa).

An N-terminal signal peptide occupies residues 1–48 (MAVLAPLIALVYSVPRLSRWLAQPYYLLSALLSAAFLLVRKLPPLCHG). Residues 49 to 102 (LPTQREDGNPCDFDWREVEILMFLSAIVMMKNRRSITVEQHIGNIFMFSKVANA) are Extracellular-facing. Residues 103–125 (ILFFRLDIRMGLLYITLCIVFLM) traverse the membrane as a helical segment. The 156-residue stretch at 114–269 (LLYITLCIVF…LYQRAKKLSK (156 aa)) folds into the Thioredoxin domain. Topologically, residues 126–296 (TCKPPLYMGP…VSDGESKKDK (171 aa)) are cytoplasmic. Ser-211, Ser-243, and Ser-288 each carry phosphoserine. Residues 269 to 296 (KAGDNIPEEQPVAPTPTRVSDGESKKDK) form a disordered region. Residues 293 to 296 (KKDK) carry the Di-lysine motif motif.

In terms of assembly, monomer. Homodimer; disulfide-linked. Occurs in both reduced and oxidized monomeric form. Oxidative conditions increase homodimerization. Interacts with CANX. Interacts with ATP2A2.

Its subcellular location is the endoplasmic reticulum membrane. The protein resides in the mitochondrion membrane. In terms of biological role, endoplasmic reticulum and mitochondria-associated protein that probably functions as a regulator of cellular redox state and thereby regulates protein post-translational modification, protein folding and mitochondrial activity. Indirectly regulates neuronal proliferation, migration, and organization in the developing brain. In Macaca fascicularis (Crab-eating macaque), this protein is Thioredoxin-related transmembrane protein 2 (TMX2).